A 317-amino-acid polypeptide reads, in one-letter code: Ataxin-3 homolog (317 aa).

In terms of domain architecture, Josephin spans I7–L178. The Nucleophile role is filled by C20. H117 (proton acceptor) is an active-site residue. Residue N132 is part of the active site. UIM domains follow at residues S219 to S239 and E247 to G264. A disordered region spans residues R254–K317. A compositionally biased stretch (polar residues) spans R276–E293. The segment covering Q294 to K317 has biased composition (basic and acidic residues). The segment at R296–R299 is interaction with cdc-48.1 and cdc-48.2.

In terms of assembly, forms a complex composed of deubiquitinating enzyme atx-3, adapter ubxn-5 and cdc-48.1. Forms a complex composed of deubiquitinating enzyme atx-3, E4 ubiquitin-protein ligase ufd-2 and cdc-48.1. Interacts (via RRDR motif) with cdc-48.1 (via N-terminus) and cdc-48.2 (via N-terminus); the interaction with cdc-48.1 is not required for atx-3 enzymatic activity. Interacts (via C-terminus) with ubxn-5. May interact with ned-8. In terms of tissue distribution, expressed in germline (at protein level). Expressed in spermatheca, pharynx, dorsal and ventral cords, some head neurons, hypodermis, body wall muscles and coelomocytes.

It localises to the cytoplasm. Its subcellular location is the nucleus. The protein localises to the nucleolus. It catalyses the reaction Thiol-dependent hydrolysis of ester, thioester, amide, peptide and isopeptide bonds formed by the C-terminal Gly of ubiquitin (a 76-residue protein attached to proteins as an intracellular targeting signal).. Functionally, acts as a chain editing deubiquitinating enzyme that binds and cleaves 'Lys-48'-linked polyubiquitin chains, with a preference for chains containing four or more ubiquitin molecules thereby modulating protein degradation by the ubiquitin-proteasome pathway. Probably by regulating the IGF-1-insulin-like pathway, regulates lifespan. Regulates germline DNA double-strand-break repair and apoptosis in response to DNA damage by recruiting E4 ubiquitin-protein ligase ufd-2 to DNA repair foci. Interacts with key regulators of transcription and represses transcription. Acts as a histone-binding protein that regulates transcription. In Caenorhabditis elegans, this protein is Ataxin-3 homolog (atx-3).